The sequence spans 271 residues: Phosphonoacetaldehyde hydrolase (271 aa).

The Nucleophile role is filled by D12. D12 and A14 together coordinate Mg(2+). K54 (schiff-base intermediate with substrate) is an active-site residue. D188 is a binding site for Mg(2+).

Belongs to the HAD-like hydrolase superfamily. PhnX family. In terms of assembly, homodimer. Mg(2+) is required as a cofactor.

The enzyme catalyses phosphonoacetaldehyde + H2O = acetaldehyde + phosphate + H(+). Functionally, involved in phosphonate degradation. This chain is Phosphonoacetaldehyde hydrolase, found in Vibrio campbellii (strain ATCC BAA-1116).